Reading from the N-terminus, the 968-residue chain is Insulin receptor substrate 1 (968 aa).

Residues 8–109 form the PH domain; the sequence is GMALSGYLKK…WLDKLLVLQR (102 aa). The IRS-type PTB domain occupies 122-236; it reads YDHVWQVVIQ…SAMSAKTESN (115 aa). The disordered stretch occupies residues 248–269; it reads DLSHEPMRKRSSSANEASKPIN. A phosphoserine mark is found at serine 286 and serine 287. The segment covering 304–329 has biased composition (polar residues); the sequence is RNGTLSESSNQTYFGSNHGLRSNTIS. Positions 304 to 370 are disordered; that stretch reads RNGTLSESSN…VDESDDNGSF (67 aa). Phosphoserine is present on serine 342. Residue tyrosine 411 is modified to Phosphotyrosine; by INSR. The YXXM motif 1 motif lies at 411–414; it reads YIPM. The tract at residues 528–555 is disordered; sequence TANRSQSSITKEGTSYGSSANRQKKSTS. A compositionally biased stretch (polar residues) spans 529–555; sequence ANRSQSSITKEGTSYGSSANRQKKSTS. Serine 555 carries the phosphoserine modification. Residues 641 to 644 carry the YXXM motif 2 motif; it reads YLEM. The span at 697-711 shows a compositional bias: basic and acidic residues; that stretch reads EKWREQPSRSEEKKS. Residues 697–739 form a disordered region; it reads EKWREQPSRSEEKKSNSPLNDNTFSSKPTNVESTSKSHDVHSA. Positions 712 to 730 are enriched in polar residues; that stretch reads NSPLNDNTFSSKPTNVEST. Phosphotyrosine; by INSR is present on tyrosine 911. Residues 922-968 form a disordered region; the sequence is QNPAKYLKRGSRESPPVSACPEDGNTYAKIDFDQSDSSSSSSNIFNT. Phosphoserine is present on residues serine 932 and serine 935. Tyrosine 948 carries the phosphotyrosine; by INSR modification. Residues 956–968 show a composition bias toward low complexity; the sequence is SDSSSSSSNIFNT.

In terms of assembly, bindings to phosphatidylinositol 3-kinase and SHP2.

Activates phosphatidylinositol 3-kinase when bound to the regulatory p85 subunit. May mediate the control of various cellular processes by insulin-like peptides. When phosphorylated by the insulin receptor binds specifically to various cellular proteins containing SH2 domains. Involved in control of cell proliferation, cell size, and body and organ growth throughout development. Also has a role in a signaling pathway controlling the physiological response required to endure periods of low nutrient conditions. Insulin/insulin-like growth factor (IGF) signaling pathway has a role in regulating aging and is necessary in the ovary for vitellogenic maturation. The protein is Insulin receptor substrate 1 (chico) of Drosophila melanogaster (Fruit fly).